A 161-amino-acid polypeptide reads, in one-letter code: Protein-export protein SecB (161 aa).

Belongs to the SecB family. As to quaternary structure, homotetramer, a dimer of dimers. One homotetramer interacts with 1 SecA dimer.

Its subcellular location is the cytoplasm. Functionally, one of the proteins required for the normal export of preproteins out of the cell cytoplasm. It is a molecular chaperone that binds to a subset of precursor proteins, maintaining them in a translocation-competent state. It also specifically binds to its receptor SecA. In Pseudomonas fluorescens (strain Pf0-1), this protein is Protein-export protein SecB.